The sequence spans 123 residues: Large ribosomal subunit protein bL12 (123 aa).

This sequence belongs to the bacterial ribosomal protein bL12 family. In terms of assembly, homodimer. Part of the ribosomal stalk of the 50S ribosomal subunit. Forms a multimeric L10(L12)X complex, where L10 forms an elongated spine to which 2 to 4 L12 dimers bind in a sequential fashion. Binds GTP-bound translation factors.

Its function is as follows. Forms part of the ribosomal stalk which helps the ribosome interact with GTP-bound translation factors. Is thus essential for accurate translation. This chain is Large ribosomal subunit protein bL12, found in Zymomonas mobilis subsp. mobilis (strain ATCC 31821 / ZM4 / CP4).